The following is a 227-amino-acid chain: Ion-translocating oxidoreductase complex subunit E (227 aa).

Helical transmembrane passes span 34-56 (AINAIGLGMTTTLVLTITNTIIS), 68-88 (IPIYMMIISSVVTSIEMLLHA), 91-111 (FNLYQSLGIFIPLIVTNCIIV), 127-147 (FFDGIFIGLGSMFAMFAVGSI), and 181-201 (TIILAVFPPGGFLILGFLIAI).

The protein belongs to the NqrDE/RnfAE family. In terms of assembly, the complex is composed of six subunits: RnfA, RnfB, RnfC, RnfD, RnfE and RnfG.

The protein resides in the cell inner membrane. Part of a membrane-bound complex that couples electron transfer with translocation of ions across the membrane. The protein is Ion-translocating oxidoreductase complex subunit E of Buchnera aphidicola subsp. Acyrthosiphon pisum (strain 5A).